The primary structure comprises 269 residues: Seven in absentia homolog 3 (269 aa).

The segment at 61-132 (GSFHPHHLSH…VVPHLRQIHR (72 aa)) adopts an SIAH-type; degenerate zinc-finger fold. The Zn(2+) site is built by Cys107, Cys114, His126, and His131.

It belongs to the SINA (Seven in absentia) family.

The protein resides in the mitochondrion. Negative regulator of PRKN translocation to damaged mitochondria. Acts probably by destabilizing PINK1 protein, hence inhibiting PRKN targeting to dysfunctional depolarized mitochondria. The polypeptide is Seven in absentia homolog 3 (SIAH3) (Homo sapiens (Human)).